A 142-amino-acid polypeptide reads, in one-letter code: Negative cofactor 2 complex subunit alpha (142 aa).

Residues 1–11 (MADQVPVTTQL) are compositionally biased toward polar residues. The disordered stretch occupies residues 1–43 (MADQVPVTTQLPPIKPEHEVPLDAGGSPVGNMGTNSNNNNELG). The residue at position 27 (serine 27) is a Phosphoserine. Positions 29 to 137 (VGNMGTNSNN…LCVEEGQTQP (109 aa)) constitute a Histone-fold domain. Serine 141 is modified (phosphoserine).

It belongs to the NC2 alpha/DRAP1 family. As to quaternary structure, component of the NC2 (negative cofactor 2) complex composed of BUR6 and NCB2. The NC2 complex associates with SPT15/TBP. Interacts with SPT15/TBP.

It localises to the nucleus. Functionally, component of the NC2 complex which represses RNA polymerase II transcription through binding to SPT15/TBP and thereby inhibiting the assembly of the preinitiation complex. The NC2 complex may also mediate transcriptional activation from TATA-driven promoters through association with SPT15/TBP. The sequence is that of Negative cofactor 2 complex subunit alpha (BUR6) from Saccharomyces cerevisiae (strain ATCC 204508 / S288c) (Baker's yeast).